A 183-amino-acid chain; its full sequence is Large ribosomal subunit protein uL22 (183 aa).

The interval 163–183 (KTAAKKQSAKKLKKQKMMYRE) is disordered. The segment covering 165 to 183 (AAKKQSAKKLKKQKMMYRE) has biased composition (basic residues).

Belongs to the universal ribosomal protein uL22 family.

This is Large ribosomal subunit protein uL22 (rpl-17) from Pectinaria gouldii (Trumpet worm).